Here is a 525-residue protein sequence, read N- to C-terminus: Transmembrane protein 184C (525 aa).

7 consecutive transmembrane segments (helical) span residues 17–37 (LLVL…IWKF), 48–68 (SWFI…WGIL), 83–103 (IIRI…ALVY), 121–141 (VIYN…PNLI), 212–232 (YLVI…LLFY), 254–274 (VVFV…LGVI), and 287–307 (AVAT…AAIA). 2 disordered regions span residues 358-394 (PKKK…PSPG) and 483-525 (LFPS…STDP). The span at 373–388 (SSLLSSSSQDLTSGSS) shows a compositional bias: low complexity. Over residues 483-502 (LFPSTETSENSMIDTSESQQ) the composition is skewed to polar residues. Over residues 503–525 (ESSDLCTESSDSSTESSDLSTDP) the composition is skewed to low complexity.

This sequence belongs to the TMEM184 family.

The protein resides in the membrane. Its function is as follows. Possible tumor suppressor which may play a role in cell growth. This chain is Transmembrane protein 184C (Tmem184c), found in Mus musculus (Mouse).